The chain runs to 1003 residues: MSSQPLTLQAMMAAILNFWSEQGCIIHQGYDLEVGAGTFNPATFLQSLGPEPFRTAYIEPSRRPQDGRYGQHPNRLQKYHQLQVILKPVPENFLSLYLESLKVIGLNLVDHDIRFVHDDWENPTIGAWGLGWEVWLNGMEITQLTYFQAVGSKPLDAISGEITYGVERIAMYLQKKNSVYDVMWNGSLTYGDITQYAEQAWSQYNFETANTTMWLKHFDDFSAEALATLDQGLPLPAYDFVIKASHAFNMLDSRGVISVTERTRYIAKIRQLARAAADKYVAWRESLGFPLLKTPPSTPTVTPKKIPTICQPEDFLLEIGSEELPATFVPTGIQQLESLAKKLLADHGIAYKHLEVLGTPRRLALCIEGLSHVTIRPESEKKGPPLSLLFMTDGSVSPQGEQFFPSHGLSISHRSALDQPSAICRVRSINGTDYLFLVIPEERKETAAILVNELPQLIRSIRFPQKMTWDNGGVEYARPIRWLVALYGDQILPISLGFVSSGNTSWGHRQLDNRQLTIPSSNMYVDTLRSACVIVSQKERRAIIKQGLQNLTGDQIVAIAPEHLVDETVFLTEHPFVISAQFDPAFCSLPKELLIAEMIQHQRYFPTQNMQGEITNRFLIVCDNSPTDSIVEGNEKALAPRLTDGNFLFKQDLLTPLSSFVEKLKSVTYFESLGSLADKTSRLKLHLEEAYALLPLCAKEDIDTAIHYCKADLVSSVVNEFPELQGIMGRYYLQNASLSRAAALAIGEHLQHITLGSNISTTGALLSILDRIDNLLSCFILGLLPTSSHDPYALRRQSLEILTLLYTTQSSVDIEDLFARLIRHFPSSIPNTVWSPEEVLSKLNTFVWGRLRTILSSLGFDKEIIATVLTDNCPKNPLTIIQSAQSIQELKNTQILKTIAATHNRLKKILASLSFSVTEQMFSLQSAEDLLFKQALDRFVEETTALPISSKDYLHLLKELAQSTELFLDSVRVASDDESTRNQRIALLIAAQKCFGFYAWDVL.

The segment at 1-310 (MSSQPLTLQA…VTPKKIPTIC (310 aa)) is glycine--tRNA ligase alpha subunit. The segment at 311 to 1003 (QPEDFLLEIG…CFGFYAWDVL (693 aa)) is glycine--tRNA ligase beta subunit.

Belongs to the class-II aminoacyl-tRNA synthetase family.

The protein localises to the cytoplasm. The catalysed reaction is tRNA(Gly) + glycine + ATP = glycyl-tRNA(Gly) + AMP + diphosphate. The polypeptide is Glycine--tRNA ligase (glyQS) (Chlamydia trachomatis serovar L2 (strain ATCC VR-902B / DSM 19102 / 434/Bu)).